A 409-amino-acid polypeptide reads, in one-letter code: Aspartic protease pepA (409 aa).

The first 19 residues, Met-1–Ala-19, serve as a signal peptide directing secretion. A propeptide spans Ser-20–Ala-65 (activation peptide). Residues Tyr-97 to Ala-404 enclose the Peptidase A1 domain. Catalysis depends on residues Asp-113 and Asp-293. A disulfide bridge connects residues Cys-329 and Cys-364. An N-linked (GlcNAc...) asparagine glycan is attached at Asn-335.

It belongs to the peptidase A1 family. As to quaternary structure, monomer.

It localises to the secreted. Its function is as follows. Secreted aspartic endopeptidase that allows assimilation of proteinaceous substrates. The scissile peptide bond is attacked by a nucleophilic water molecule activated by two aspartic residues in the active site. Shows a broad primary substrate specificity. Favors hydrophobic residues at the P1 and P1' positions. The chain is Aspartic protease pepA from Leptosphaeria maculans (strain JN3 / isolate v23.1.3 / race Av1-4-5-6-7-8) (Blackleg fungus).